A 104-amino-acid polypeptide reads, in one-letter code: Large ribosomal subunit protein bL21 (104 aa).

The protein belongs to the bacterial ribosomal protein bL21 family. As to quaternary structure, part of the 50S ribosomal subunit. Contacts protein L20.

Functionally, this protein binds to 23S rRNA in the presence of protein L20. This chain is Large ribosomal subunit protein bL21, found in Moorella thermoacetica (strain ATCC 39073 / JCM 9320).